A 311-amino-acid chain; its full sequence is Lipoyl synthase (311 aa).

[4Fe-4S] cluster is bound by residues Cys55, Cys60, Cys66, Cys81, Cys85, Cys88, and Ser292. The Radical SAM core domain maps to Trp67–Ala281.

This sequence belongs to the radical SAM superfamily. Lipoyl synthase family. Requires [4Fe-4S] cluster as cofactor.

It is found in the cytoplasm. It carries out the reaction [[Fe-S] cluster scaffold protein carrying a second [4Fe-4S](2+) cluster] + N(6)-octanoyl-L-lysyl-[protein] + 2 oxidized [2Fe-2S]-[ferredoxin] + 2 S-adenosyl-L-methionine + 4 H(+) = [[Fe-S] cluster scaffold protein] + N(6)-[(R)-dihydrolipoyl]-L-lysyl-[protein] + 4 Fe(3+) + 2 hydrogen sulfide + 2 5'-deoxyadenosine + 2 L-methionine + 2 reduced [2Fe-2S]-[ferredoxin]. The protein operates within protein modification; protein lipoylation via endogenous pathway; protein N(6)-(lipoyl)lysine from octanoyl-[acyl-carrier-protein]: step 2/2. In terms of biological role, catalyzes the radical-mediated insertion of two sulfur atoms into the C-6 and C-8 positions of the octanoyl moiety bound to the lipoyl domains of lipoate-dependent enzymes, thereby converting the octanoylated domains into lipoylated derivatives. The sequence is that of Lipoyl synthase from Mycobacterium bovis (strain ATCC BAA-935 / AF2122/97).